The chain runs to 154 residues: Endoribonuclease YbeY (154 aa).

Zn(2+) contacts are provided by His-113, His-117, and His-123.

Belongs to the endoribonuclease YbeY family. Requires Zn(2+) as cofactor.

Its subcellular location is the cytoplasm. Single strand-specific metallo-endoribonuclease involved in late-stage 70S ribosome quality control and in maturation of the 3' terminus of the 16S rRNA. This Vibrio cholerae serotype O1 (strain ATCC 39541 / Classical Ogawa 395 / O395) protein is Endoribonuclease YbeY.